Consider the following 150-residue polypeptide: Large ribosomal subunit protein uL13 (150 aa).

This sequence belongs to the universal ribosomal protein uL13 family. Part of the 50S ribosomal subunit.

This protein is one of the early assembly proteins of the 50S ribosomal subunit, although it is not seen to bind rRNA by itself. It is important during the early stages of 50S assembly. The sequence is that of Large ribosomal subunit protein uL13 from Chlamydia caviae (strain ATCC VR-813 / DSM 19441 / 03DC25 / GPIC) (Chlamydophila caviae).